The chain runs to 113 residues: Large ribosomal subunit protein uL22 (113 aa).

Belongs to the universal ribosomal protein uL22 family. Part of the 50S ribosomal subunit.

This protein binds specifically to 23S rRNA; its binding is stimulated by other ribosomal proteins, e.g. L4, L17, and L20. It is important during the early stages of 50S assembly. It makes multiple contacts with different domains of the 23S rRNA in the assembled 50S subunit and ribosome. Its function is as follows. The globular domain of the protein is located near the polypeptide exit tunnel on the outside of the subunit, while an extended beta-hairpin is found that lines the wall of the exit tunnel in the center of the 70S ribosome. This Trichlorobacter lovleyi (strain ATCC BAA-1151 / DSM 17278 / SZ) (Geobacter lovleyi) protein is Large ribosomal subunit protein uL22.